A 184-amino-acid chain; its full sequence is MAFLKDLYKNKVAKDLQKEFAYSSVMQIPKIEKVVINAGIGNAVADKKHLEAAISELTLITGQRPVETKAKKSIATFKLRAGQSIGAKVTLRGDRMWAFIETLFNIALPRVRDFKGISNNSFDDQGNYTLGIKEQIIFPQVVYDDVKSVRGFDVTFVTTAKTAQEAKALLVGLGAPFQKVRGDK.

The protein belongs to the universal ribosomal protein uL5 family. Part of the 50S ribosomal subunit; part of the 5S rRNA/L5/L18/L25 subcomplex. Contacts the 5S rRNA and the P site tRNA. Forms a bridge to the 30S subunit in the 70S ribosome.

Functionally, this is one of the proteins that bind and probably mediate the attachment of the 5S RNA into the large ribosomal subunit, where it forms part of the central protuberance. In the 70S ribosome it contacts protein S13 of the 30S subunit (bridge B1b), connecting the 2 subunits; this bridge is implicated in subunit movement. Contacts the P site tRNA; the 5S rRNA and some of its associated proteins might help stabilize positioning of ribosome-bound tRNAs. The polypeptide is Large ribosomal subunit protein uL5 (Ureaplasma urealyticum serovar 10 (strain ATCC 33699 / Western)).